The following is a 60-amino-acid chain: Large ribosomal subunit protein uL30 (60 aa).

Belongs to the universal ribosomal protein uL30 family. As to quaternary structure, part of the 50S ribosomal subunit.

The sequence is that of Large ribosomal subunit protein uL30 from Kineococcus radiotolerans (strain ATCC BAA-149 / DSM 14245 / SRS30216).